The chain runs to 1487 residues: MIRLGAPQTLVLLTLLVAAVLRCHGQDVQKAGSCVQDGQRYNDKDVWKPEPCRICVCDTGTVLCDDIICEDMKDCLSPETPFGECCPICSADLPTASGQPGPKGQKGEPGDIKDIVGPKGPPGPQGPAGEQGPRGDRGDKGEKGAPGPRGRDGEPGTPGNPGPPGPPGPPGPPGLGGNFAAQMAGGFDEKAGGAQMGVMQGPMGPMGPRGPPGPAGAPGPQGFQGNPGEPGEPGVSGPMGPRGPPGPPGKPGDDGEAGKPGKSGERGPPGPQGARGFPGTPGLPGVKGHRGYPGLDGAKGEAGAPGVKGESGSPGENGSPGPMGPRGLPGERGRTGPAGAAGARGNDGQPGPAGPPGPVGPAGGPGFPGAPGAKGEAGPTGARGPEGAQGPRGEPGTPGSPGPAGAAGNPGTDGIPGAKGSAGAPGIAGAPGFPGPRGPPGPQGATGPLGPKGQTGEPGIAGFKGEQGPKGEPGPAGPQGAPGPAGEEGKRGARGEPGGAGPAGPPGERGAPGNRGFPGQDGLAGPKGAPGERGPSGLAGPKGANGDPGRPGEPGLPGARGLTGRPGDAGPQGKVGPSGAPGEDGRPGPPGPQGARGQPGVMGFPGPKGANGEPGKAGEKGLPGAPGLRGLPGKDGETGAAGPPGPAGPAGERGEQGAPGPSGFQGLPGPPGPPGEGGKPGDQGVPGEAGAPGLVGPRGERGFPGERGSPGSQGLQGARGLPGTPGTDGPKGAAGPAGPPGAQGPPGLQGMPGERGAAGIAGPKGDRGDVGEKGPEGAPGKDGGRGLTGPIGPPGPAGANGEKGEVGPPGPAGTAGARGAPGERGETGPPGPAGFAGPPGADGQPGAKGEQGEAGQKGDAGAPGPQGPSGAPGPQGPTGVTGPKGARGAQGPPGATGFPGAAGRVGPPGSNGNPGPPGPPGPSGKDGPKGARGDSGPPGRAGDPGLQGPAGPPGEKGEPGDDGPSGPDGPPGPQGLAGQRGIVGLPGQRGERGFPGLPGPSGEPGKQGAPGASGDRGPPGPVGPPGLTGPAGEPGREGSPGADGPPGRDGAAGVKGDRGETGAVGAPGAPGPPGSPGPAGPIGKQGDRGEAGAQGPMGPAGPAGARGMPGPQGPRGDKGETGEAGERGLKGHRGFTGLQGLPGPPGPSGDQGASGPAGPSGPRGPPGPVGPSGKDGANGIPGPIGPPGPRGRSGETGPAGPPGNPGPPGPPGPPGPGIDMSAFAGLGQREKGPDPLQYMRADEAAGNLRQHDAEVDATLKSLNNQIESLRSPEGSRKNPARTCRDLKLCHPEWKSGDYWIDPNQGCTLDAMKVFCNMETGETCVYPNPASVPKKNWWSSKSKDKKHIWFGETINGGFHFSYGDDNLAPNTANVQMTFLRLLSTEGSQNITYHCKNSIAYLDEAAGNLKKALLIQGSNDVEIRAEGNSRFTYTVLKDGCTKHTGKWGKTMIEYRSQKTSRLPIIDIAPMDIGGPEQEFGVDIGPVCFL.

The signal sequence occupies residues methionine 1 to glycine 25. Positions glutamine 26–alanine 181 are cleaved as a propeptide — N-terminal propeptide. The VWFC domain occupies glycine 32–serine 90. Residues alanine 96–aspartate 1234 form a disordered region. Basic and acidic residues-rich tracts occupy residues glutamine 105–valine 116 and proline 133–glutamate 154. Positions proline 158–proline 173 are enriched in pro residues. Residue lysine 190 is modified to 5-hydroxylysine. Lysine 190 is a glycosylation site (O-linked (Gal...) hydroxylysine). Residues glycine 192–methionine 203 show a composition bias toward low complexity. Residues glycine 201–proline 1214 are triple-helical region. Positions proline 208 to alanine 217 are enriched in pro residues. Hydroxyproline is present on residues proline 212, proline 218, proline 230, proline 233, proline 245, proline 248, proline 251, proline 260, proline 269, proline 278, proline 281, and proline 284. Residues proline 218 to methionine 239 show a composition bias toward low complexity. Pro residues predominate over residues proline 241 to lysine 250. Positions proline 251–glutamate 265 are enriched in basic and acidic residues. Lysine 287 bears the 5-hydroxylysine mark. An O-linked (Gal...) hydroxylysine glycan is attached at lysine 287. Proline 293 bears the Hydroxyproline mark. At lysine 299 the chain carries 5-hydroxylysine. The O-linked (Gal...) hydroxylysine glycan is linked to lysine 299. Proline 305 carries the hydroxyproline modification. Lysine 308 carries the post-translational modification 5-hydroxylysine. The O-linked (Gal...) hydroxylysine glycan is linked to lysine 308. Low complexity predominate over residues glutamate 310 to proline 320. Hydroxyproline is present on residues proline 314, proline 320, proline 329, proline 350, proline 356, proline 365, proline 368, and proline 371. The span at threonine 335–proline 350 shows a compositional bias: low complexity. Over residues glycine 360–glycine 369 the composition is skewed to gly residues. Composition is skewed to low complexity over residues alanine 370–alanine 382 and proline 391–proline 431. Residue lysine 374 is modified to 5-hydroxylysine. Lysine 374 carries O-linked (Gal...) hydroxylysine glycosylation. A hydroxyproline mark is found at proline 395, proline 398, proline 401, proline 410, and proline 416. Residue lysine 419 is modified to 5-hydroxylysine. Hydroxyproline occurs at positions 425, 431, 434, and 440. Residues phenylalanine 433–proline 442 show a composition bias toward pro residues. Lysine 452 carries the 5-hydroxylysine modification. Proline 458 carries the hydroxyproline modification. Residues lysine 464 and lysine 470 each carry the 5-hydroxylysine modification. 6 positions are modified to hydroxyproline: proline 473, proline 482, proline 497, proline 506, proline 512, and proline 518. Position 527 is a 5-hydroxylysine (lysine 527). Proline 530 is modified (hydroxyproline). Position 542 is a 5-hydroxylysine (lysine 542). 8 positions are modified to hydroxyproline: proline 551, proline 557, proline 566, proline 581, proline 587, proline 590, proline 599, and proline 605. Position 608 is a 5-hydroxylysine (lysine 608). A glycan (O-linked (Gal...) hydroxylysine) is linked at lysine 608. The residue at position 614 (proline 614) is a Hydroxyproline. At lysine 620 the chain carries 5-hydroxylysine. O-linked (Gal...) hydroxylysine glycosylation is present at lysine 620. Positions leucine 622 to leucine 631 are enriched in low complexity. A hydroxyproline mark is found at proline 623, proline 626, proline 632, proline 644, proline 659, and proline 668. A compositionally biased stretch (low complexity) spans glutamine 656 to leucine 667. A 3-hydroxyproline modification is found at proline 670. Proline 671 and proline 674 each carry hydroxyproline. Positions leucine 721–proline 736 are enriched in low complexity. Over residues lysine 764–proline 775 the composition is skewed to basic and acidic residues. Composition is skewed to low complexity over residues alanine 833 to lysine 848 and proline 877 to asparagine 913. Proline 907 carries the post-translational modification 3-hydroxyproline. 4-hydroxyproline is present on residues proline 908, proline 914, and proline 920. Over residues alanine 1069–alanine 1079 the composition is skewed to pro residues. Positions alanine 1091 to proline 1109 are enriched in low complexity. Residues arginine 1115–leucine 1129 show a composition bias toward basic and acidic residues. The residue at position 1130 (lysine 1130) is a 5-hydroxylysine. An O-linked (Gal...) hydroxylysine glycan is attached at lysine 1130. Proline 1144 is modified (3-hydroxyproline). Over residues serine 1148–alanine 1157 the composition is skewed to low complexity. Proline 1181 carries the post-translational modification 4-hydroxyproline. Proline 1186 carries the post-translational modification 3-hydroxyproline. Position 1187 is a 4-hydroxyproline (proline 1187). Pro residues predominate over residues alanine 1199–proline 1216. Residue proline 1201 is modified to 3-hydroxyproline. Proline 1202 and proline 1205 each carry 4-hydroxyproline. 3-hydroxyproline is present on proline 1207. 2 positions are modified to 4-hydroxyproline: proline 1208 and proline 1211. The residue at position 1213 (proline 1213) is a 3-hydroxyproline. Proline 1214 bears the 4-hydroxyproline mark. The segment at glycine 1215–alanine 1241 is nonhelical region (C-terminal). In terms of domain architecture, Fibrillar collagen NC1 spans alanine 1253 to leucine 1487. 3 disulfide bridges follow: cysteine 1283/cysteine 1315, cysteine 1323/cysteine 1485, and cysteine 1393/cysteine 1438. Ca(2+) contacts are provided by aspartate 1301, asparagine 1303, glutamine 1304, cysteine 1306, and aspartate 1309. A glycan (N-linked (GlcNAc...) asparagine) is linked at asparagine 1388.

The protein belongs to the fibrillar collagen family. In terms of assembly, homotrimers of alpha 1(II) chains. Probably 3-hydroxylated on prolines by LEPREL1. Proline residues at the third position of the tripeptide repeating unit (G-X-P) are hydroxylated in some or all of the chains. Proline residues at the second position of the tripeptide repeating unit (G-P-X) are hydroxylated in some of the chains. Post-translationally, O-linked glycans consist of Glc-Gal disaccharides bound to the oxygen atom of post-translationally added hydroxyl groups. In terms of processing, contains mostly 4-hydroxyproline. Prolines at the third position of the tripeptide repeating unit (G-X-P) are 4-hydroxylated in some or all of the chains. Contains 3-hydroxyproline at a few sites. This modification occurs on the first proline residue in the sequence motif Gly-Pro-Hyp, where Hyp is 4-hydroxyproline. Post-translationally, lysine residues at the third position of the tripeptide repeating unit (G-X-Y) are 5-hydroxylated in some or all of the chains. In terms of processing, O-glycosylated on hydroxylated lysine residues. The O-linked glycan consists of a Glc-Gal disaccharide.

The protein resides in the secreted. The protein localises to the extracellular space. It is found in the extracellular matrix. In terms of biological role, type II collagen is specific for cartilaginous tissues. It is essential for the normal embryonic development of the skeleton, for linear growth and for the ability of cartilage to resist compressive forces. This is Collagen alpha-1(II) chain from Bos taurus (Bovine).